Reading from the N-terminus, the 449-residue chain is Glutamyl-tRNA(Gln) amidotransferase subunit A (449 aa).

Catalysis depends on charge relay system residues lysine 51 and serine 126. The segment at serine 103–glycine 128 is disordered. Residues serine 119–glycine 128 show a composition bias toward low complexity. Serine 150 acts as the Acyl-ester intermediate in catalysis.

The protein belongs to the amidase family. GatA subfamily. As to quaternary structure, heterotrimer of A, B and C subunits.

It catalyses the reaction L-glutamyl-tRNA(Gln) + L-glutamine + ATP + H2O = L-glutaminyl-tRNA(Gln) + L-glutamate + ADP + phosphate + H(+). Allows the formation of correctly charged Gln-tRNA(Gln) through the transamidation of misacylated Glu-tRNA(Gln) in organisms which lack glutaminyl-tRNA synthetase. The reaction takes place in the presence of glutamine and ATP through an activated gamma-phospho-Glu-tRNA(Gln). This chain is Glutamyl-tRNA(Gln) amidotransferase subunit A, found in Wolinella succinogenes (strain ATCC 29543 / DSM 1740 / CCUG 13145 / JCM 31913 / LMG 7466 / NCTC 11488 / FDC 602W) (Vibrio succinogenes).